A 43-amino-acid chain; its full sequence is Photosystem I reaction center subunit IX (43 aa).

Residues 7-27 (YLSVAPVLSTLWFGSLAGLLI) traverse the membrane as a helical segment.

The protein belongs to the PsaJ family.

It is found in the plastid. The protein resides in the chloroplast thylakoid membrane. Functionally, may help in the organization of the PsaE and PsaF subunits. This is Photosystem I reaction center subunit IX from Aethionema cordifolium (Lebanon stonecress).